The chain runs to 671 residues: DNA ligase (671 aa).

Residues 31–35, 80–81, and glutamate 110 contribute to the NAD(+) site; these read DAEYD and SL. Lysine 112 serves as the catalytic N6-AMP-lysine intermediate. Residues arginine 133, glutamate 167, lysine 283, and lysine 307 each coordinate NAD(+). Zn(2+)-binding residues include cysteine 401, cysteine 404, cysteine 419, and cysteine 424. The BRCT domain maps to 587–671; sequence EEELVFAGKT…YLPDEGGLNE (85 aa).

It belongs to the NAD-dependent DNA ligase family. LigA subfamily. Requires Mg(2+) as cofactor. It depends on Mn(2+) as a cofactor.

It carries out the reaction NAD(+) + (deoxyribonucleotide)n-3'-hydroxyl + 5'-phospho-(deoxyribonucleotide)m = (deoxyribonucleotide)n+m + AMP + beta-nicotinamide D-nucleotide.. Its function is as follows. DNA ligase that catalyzes the formation of phosphodiester linkages between 5'-phosphoryl and 3'-hydroxyl groups in double-stranded DNA using NAD as a coenzyme and as the energy source for the reaction. It is essential for DNA replication and repair of damaged DNA. The protein is DNA ligase of Listeria monocytogenes serotype 4a (strain HCC23).